Reading from the N-terminus, the 484-residue chain is tRNA sulfurtransferase (484 aa).

The 105-residue stretch at 63–167 (REMIERLTCT…LDRLFVIHRQ (105 aa)) folds into the THUMP domain. ATP is bound by residues 185–186 (LM), Lys267, Gly289, and Gln298. A disulfide bridge connects residues Cys346 and Cys457. Residues 405 to 483 (VLPGQIVIDI…GHTNVRVYRP (79 aa)) form the Rhodanese domain. Cys457 acts as the Cysteine persulfide intermediate in catalysis.

Belongs to the ThiI family.

The protein localises to the cytoplasm. The enzyme catalyses [ThiI sulfur-carrier protein]-S-sulfanyl-L-cysteine + a uridine in tRNA + 2 reduced [2Fe-2S]-[ferredoxin] + ATP + H(+) = [ThiI sulfur-carrier protein]-L-cysteine + a 4-thiouridine in tRNA + 2 oxidized [2Fe-2S]-[ferredoxin] + AMP + diphosphate. It catalyses the reaction [ThiS sulfur-carrier protein]-C-terminal Gly-Gly-AMP + S-sulfanyl-L-cysteinyl-[cysteine desulfurase] + AH2 = [ThiS sulfur-carrier protein]-C-terminal-Gly-aminoethanethioate + L-cysteinyl-[cysteine desulfurase] + A + AMP + 2 H(+). It participates in cofactor biosynthesis; thiamine diphosphate biosynthesis. In terms of biological role, catalyzes the ATP-dependent transfer of a sulfur to tRNA to produce 4-thiouridine in position 8 of tRNAs, which functions as a near-UV photosensor. Also catalyzes the transfer of sulfur to the sulfur carrier protein ThiS, forming ThiS-thiocarboxylate. This is a step in the synthesis of thiazole, in the thiamine biosynthesis pathway. The sulfur is donated as persulfide by IscS. In Pseudomonas aeruginosa (strain UCBPP-PA14), this protein is tRNA sulfurtransferase.